Here is a 96-residue protein sequence, read N- to C-terminus: Small ribosomal subunit protein bS6 (96 aa).

This sequence belongs to the bacterial ribosomal protein bS6 family.

In terms of biological role, binds together with bS18 to 16S ribosomal RNA. This chain is Small ribosomal subunit protein bS6, found in Streptococcus mutans serotype c (strain ATCC 700610 / UA159).